Consider the following 88-residue polypeptide: Large ribosomal subunit protein bL27 (88 aa).

The interval 1–21 (MAHKKGASSSRNGRDSAAQRL) is disordered.

It belongs to the bacterial ribosomal protein bL27 family.

The chain is Large ribosomal subunit protein bL27 from Mycobacterium avium (strain 104).